The primary structure comprises 975 residues: 26S proteasome non-ATPase regulatory subunit 1 (975 aa).

The tract at residues 272–303 is disordered; the sequence is EKKSTTTTTTTPASDSMEIDIDSGNEKSGGSS. PC repeat units lie at residues 393 to 426, 431 to 464, 465 to 499, 500 to 534, 536 to 569, 570 to 605, 606 to 638, 640 to 674, 675 to 715, and 718 to 748; these read SAIS…NQTP, GSLY…ILHH, GASL…VSGE, AAGL…EKTI, SLSM…LIRY, GGMY…SVRR, AAVT…PHVR, GAAF…YVKQ, AAWI…DSMS, and GAVL…NMNA. Disordered stretches follow at residues 832-882 and 922-975; these read SSRS…KSNP and PEQL…EFTE. Composition is skewed to basic and acidic residues over residues 842-880 and 926-935; these read DVEK…ERKS and VVKEKPETKQ. A compositionally biased stretch (low complexity) spans 944-961; the sequence is TATATASLPNATTTTSPT.

It belongs to the proteasome subunit S1 family.

Its function is as follows. Acts as a regulatory subunit of the 26 proteasome which is involved in the ATP-dependent degradation of ubiquitinated proteins. The protein is 26S proteasome non-ATPase regulatory subunit 1 (psmD1) of Dictyostelium discoideum (Social amoeba).